The primary structure comprises 348 residues: Heat-inducible transcription repressor HrcA (348 aa).

Belongs to the HrcA family.

In terms of biological role, negative regulator of class I heat shock genes (grpE-dnaK-dnaJ and groELS operons). Prevents heat-shock induction of these operons. This Chlorobium chlorochromatii (strain CaD3) protein is Heat-inducible transcription repressor HrcA.